Consider the following 352-residue polypeptide: C-C chemokine receptor type 5 (352 aa).

Over 1–30 (MDYQVSSPTYDIDYYTSEPCQKTNVKQIAA) the chain is Extracellular. Tyr-3 bears the Sulfotyrosine mark. 2 O-linked (GalNAc...) serine glycosylation sites follow: Ser-6 and Ser-7. Sulfotyrosine is present on residues Tyr-10, Tyr-14, and Tyr-15. 2 cysteine pairs are disulfide-bonded: Cys-20–Cys-269 and Cys-101–Cys-178. A helical membrane pass occupies residues 31–58 (RLLPPLYSLVFIFGFVGNMLVILILINC). The Cytoplasmic portion of the chain corresponds to 59–68 (KRLKSMTDIY). Residues 69 to 89 (LLNLAISDLFFLLTVPFWAHY) traverse the membrane as a helical segment. The Extracellular portion of the chain corresponds to 90-102 (AAAQWDFGNTMCQ). The chain crosses the membrane as a helical span at residues 103 to 124 (LLTGLYFIGFFSGIFFIILLTI). The Cytoplasmic portion of the chain corresponds to 125-141 (DRYLAIVHAVFALKART). Residues 142–166 (VTFGVVTSVITWVVAVFASLPGIIF) traverse the membrane as a helical segment. Residues 167 to 198 (TRSQKEGLHYTCSSHFPYSQYQFWKNFQTLKI) are Extracellular-facing. The helical transmembrane segment at 199–218 (VILGLVLPLLVMVICYSGIL) threads the bilayer. The Cytoplasmic portion of the chain corresponds to 219–235 (KTLLRCRNEKKRHRAVR). Residues 236 to 260 (LIFTIMIVYFLFWAPYNIVLLLNTF) traverse the membrane as a helical segment. At 261–277 (QEFFGLNNCSSSNRLDQ) the chain is on the extracellular side. The chain crosses the membrane as a helical span at residues 278–301 (AMQVTETLGMTHCCINPIIYAFVG). The Cytoplasmic segment spans residues 302-352 (EKFRNYLLVFFQKHIAKRFCKCCSIFQQEAPERASSVYTRSTGEQEISVGL). 3 S-palmitoyl cysteine lipidation sites follow: Cys-321, Cys-323, and Cys-324. A phosphoserine; by BARK1 mark is found at Ser-336, Ser-337, Ser-342, and Ser-349.

The protein belongs to the G-protein coupled receptor 1 family. As to quaternary structure, interacts with PRAF2. Efficient ligand binding to CCL3/MIP-1alpha and CCL4/MIP-1beta requires sulfation, O-glycosylation and sialic acid modifications. Glycosylation on Ser-6 is required for efficient binding of CCL4. Interacts with GRK2. Interacts with ARRB1 and ARRB2. Interacts with CNIH4. Interacts with S100A4; this interaction stimulates T-lymphocyte chemotaxis. Post-translationally, sulfated on at least 2 of the N-terminal tyrosines. Sulfation is required for efficient binding of the chemokines, CCL3 and CCL4. Palmitoylation in the C-terminal is important for cell surface expression. In terms of processing, phosphorylation on serine residues in the C-terminal is stimulated by binding CC chemokines especially by APO-RANTES. Post-translationally, O-glycosylated, but not N-glycosylated. Ser-6 appears to be the major site even if Ser-7 may be also O-glycosylated. Also sialylated glycans present which contribute to chemokine binding. Thr-16 and Ser-17 may also be glycosylated and, if so, with small moieties such as a T-antigen.

Its subcellular location is the cell membrane. Its function is as follows. Receptor for a number of inflammatory CC-chemokines including CCL3/MIP-1-alpha, CCL4/MIP-1-beta and RANTES and subsequently transduces a signal by increasing the intracellular calcium ion level. May play a role in the control of granulocytic lineage proliferation or differentiation. Participates in T-lymphocyte migration to the infection site by acting as a chemotactic receptor. This Gorilla gorilla gorilla (Western lowland gorilla) protein is C-C chemokine receptor type 5 (CCR5).